Here is a 788-residue protein sequence, read N- to C-terminus: Protein translocase subunit SecA 2 (788 aa).

ATP contacts are provided by residues Q86, 104 to 108 (GEGKT), and D493.

It belongs to the SecA family. Monomer and homodimer. Part of the essential Sec protein translocation apparatus which comprises SecA, SecYEG and auxiliary proteins SecDF. Other proteins may also be involved.

The protein resides in the cell membrane. Its subcellular location is the cytoplasm. The catalysed reaction is ATP + H2O + cellular proteinSide 1 = ADP + phosphate + cellular proteinSide 2.. In terms of biological role, part of the Sec protein translocase complex. Interacts with the SecYEG preprotein conducting channel. Has a central role in coupling the hydrolysis of ATP to the transfer of proteins into and across the cell membrane, serving as an ATP-driven molecular motor driving the stepwise translocation of polypeptide chains across the membrane. In Bacillus cereus (strain ZK / E33L), this protein is Protein translocase subunit SecA 2.